We begin with the raw amino-acid sequence, 460 residues long: Cysteine--tRNA ligase (460 aa).

Cysteine 28 serves as a coordination point for Zn(2+). The 'HIGH' region motif lies at 30-40 (MTVYDYCHLGH). 3 residues coordinate Zn(2+): cysteine 209, histidine 234, and glutamate 238. The short motif at 266–270 (KMSKS) is the 'KMSKS' region element. Position 269 (lysine 269) interacts with ATP.

Belongs to the class-I aminoacyl-tRNA synthetase family. In terms of assembly, monomer. It depends on Zn(2+) as a cofactor.

It is found in the cytoplasm. The catalysed reaction is tRNA(Cys) + L-cysteine + ATP = L-cysteinyl-tRNA(Cys) + AMP + diphosphate. The sequence is that of Cysteine--tRNA ligase from Pseudomonas paraeruginosa (strain DSM 24068 / PA7) (Pseudomonas aeruginosa (strain PA7)).